The chain runs to 202 residues: Protein DEHYDRATION-INDUCED 19 homolog 5 (202 aa).

Residues 88–97 show a composition bias toward basic residues; it reads SHLLKRRKPS. Positions 88–120 are disordered; sequence SHLLKRRKPSRPSSSWPTPSNNSDPYFEGPPQY. The segment covering 98–112 has biased composition (low complexity); that stretch reads RPSSSWPTPSNNSDP.

Belongs to the Di19 family.

The protein is Protein DEHYDRATION-INDUCED 19 homolog 5 (DI19-5) of Oryza sativa subsp. japonica (Rice).